Consider the following 553-residue polypeptide: Salicylyl-CoA synthase / salicylate adenylyltransferase (553 aa).

Gly-203 is an ATP binding site. Residue 246 to 247 (HN) coordinates substrate. ATP-binding residues include Gly-320, Val-342, Asp-426, Arg-441, and Lys-533. Position 533 (Lys-533) interacts with substrate.

The protein belongs to the ATP-dependent AMP-binding enzyme family.

The catalysed reaction is salicylate + ATP + CoA = 2-hydroxybenzoyl-CoA + AMP + diphosphate. Functionally, involved in the degradation of salicylate via a pathway involving coenzyme A derivative. Catalyzes the conversion of salicylate to salicyloyl-CoA via the formation of a salicylate-adenylate intermediate. The substrate specificity is strong, since benzoate, 3-hydroxybenzoate, 4-hydroxybenzoate, gentisate, 2-aminobenzoate, aminobenzoate, salicylamide, salicylaldoxime and 2-hydroxyphenyl acetate cannot substitute for salicylate. This chain is Salicylyl-CoA synthase / salicylate adenylyltransferase, found in Streptomyces sp.